We begin with the raw amino-acid sequence, 767 residues long: Photosystem I P700 chlorophyll a apoprotein A1 (767 aa).

The tract at residues 1 to 22 (MTISPPESGEKNKKVLEDPVKA) is disordered. The segment covering 8–22 (SGEKNKKVLEDPVKA) has biased composition (basic and acidic residues). 8 helical membrane-spanning segments follow: residues 76 to 99 (IFSA…FHGA), 162 to 185 (LMAL…FHYH), 201 to 225 (LNHH…HIGA), 309 to 327 (VSHH…GHMY), 368 to 391 (RHAQ…HHMY), 407 to 433 (LGLF…IAMV), 455 to 477 (ALIS…LYIH), and 558 to 576 (LMIH…LILL). [4Fe-4S] cluster is bound by residues Cys600 and Cys609. Helical transmembrane passes span 616-637 (HVFL…HFSW) and 681-703 (ISMY…MFLF). His692 contacts divinylchlorophyll a'. 2 residues coordinate divinyl chlorophyll a: Met700 and Tyr708. Position 709 (Trp709) interacts with phylloquinone. Residues 741–761 (AVGVTHFLVGGIATTWAFFHA) traverse the membrane as a helical segment.

This sequence belongs to the PsaA/PsaB family. In terms of assembly, the PsaA/B heterodimer binds the P700 divinyl chlorophyll special pair and subsequent electron acceptors. PSI consists of a core antenna complex that captures photons, and an electron transfer chain that converts photonic excitation into a charge separation. The cyanobacterial PSI reaction center is composed of one copy each of PsaA,B,C,D,E,F,I,J,K,L,M and X, and forms trimeric complexes. Requires PSI electron transfer chain: 5 divinyl chlorophyll a, 1 divinyl chlorophyll a', 2 phylloquinones and 3 4Fe-4S clusters. PSI core antenna: 90 divinyl chlorophyll a, 22 carotenoids, 3 phospholipids and 1 galactolipid. P700 is a divinyl chlorophyll a/divinyl chlorophyll a' dimer, A0 is one or more divinyl chlorophyll a, A1 is one or both phylloquinones and FX is a shared 4Fe-4S iron-sulfur center. as cofactor.

It is found in the cellular thylakoid membrane. The enzyme catalyses reduced [plastocyanin] + hnu + oxidized [2Fe-2S]-[ferredoxin] = oxidized [plastocyanin] + reduced [2Fe-2S]-[ferredoxin]. In terms of biological role, psaA and PsaB bind P700, the primary electron donor of photosystem I (PSI), as well as the electron acceptors A0, A1 and FX. PSI is a plastocyanin/cytochrome c6-ferredoxin oxidoreductase, converting photonic excitation into a charge separation, which transfers an electron from the donor P700 chlorophyll pair to the spectroscopically characterized acceptors A0, A1, FX, FA and FB in turn. Oxidized P700 is reduced on the lumenal side of the thylakoid membrane by plastocyanin or cytochrome c6. This chain is Photosystem I P700 chlorophyll a apoprotein A1, found in Prochlorococcus marinus (strain AS9601).